The primary structure comprises 78 residues: Large ribosomal subunit protein bL28 (78 aa).

Belongs to the bacterial ribosomal protein bL28 family.

The protein is Large ribosomal subunit protein bL28 of Histophilus somni (strain 129Pt) (Haemophilus somnus).